The chain runs to 884 residues: E3 ubiquitin-protein ligase BRE1-like 1 (884 aa).

Residues Met1–Ser37 are disordered. Residues Tyr49 to Leu86 are a coiled coil. The segment at Lys107–Thr127 is disordered. Over residues Ser108 to Asn121 the composition is skewed to low complexity. 4 coiled-coil regions span residues Leu216–Leu541, Ser580–Ile663, Arg696–Asp762, and Lys789–Arg827. The segment at Cys832–Ser871 adopts an RING-type zinc-finger fold.

The protein belongs to the BRE1 family. In terms of assembly, interacts with SKIPA. Interacts with HUB2.

It is found in the nucleus. It carries out the reaction S-ubiquitinyl-[E2 ubiquitin-conjugating enzyme]-L-cysteine + [acceptor protein]-L-lysine = [E2 ubiquitin-conjugating enzyme]-L-cysteine + N(6)-ubiquitinyl-[acceptor protein]-L-lysine.. The protein operates within protein modification; protein ubiquitination. E3 ubiquitin-protein ligase that monoubiquitinates H2B to form H2BK143ub1. H2BK143ub1 gives a specific tag for epigenetic transcriptional activation and is a prerequisite for H3 Lys-4 methylation (H3K4me). It thereby plays a central role in histone code and gene regulation. H2B monoubiquitination (H2BK143ub1), mediated by HUB1, modulates transcriptional regulation of anther development, likely by promoting histone H3K4 dimethylation (H3K4me2) in the chromatin of the key tapetum degradation-related genes C4, CP1 and UDT1. The sequence is that of E3 ubiquitin-protein ligase BRE1-like 1 from Oryza sativa subsp. japonica (Rice).